The sequence spans 207 residues: MTKVIKSKYKVSRRLGTSVWGHEKDAINNKNYKPGQQGNSSSISKPSDYSKHLIAKQRLKSHYGRISEKQFRNTFKIARKKSGNTAENLVGLLERRLDAVVYRLNIAPTIFAARQLVSHKHIKVNGKKINIASYRVKAGDSIELSEQAKQIPIVIGAISKKARRIPEYLAFDDEKFIGNFIRMPSSISEVPYPFDPQINLVVEFYSA.

The segment at 26–47 (AINNKNYKPGQQGNSSSISKPS) is disordered. Residues 28-39 (NNKNYKPGQQGN) show a composition bias toward polar residues. The S4 RNA-binding domain occupies 95–158 (RRLDAVVYRL…KQIPIVIGAI (64 aa)).

Belongs to the universal ribosomal protein uS4 family. Part of the 30S ribosomal subunit. Contacts protein S5. The interaction surface between S4 and S5 is involved in control of translational fidelity.

In terms of biological role, one of the primary rRNA binding proteins, it binds directly to 16S rRNA where it nucleates assembly of the body of the 30S subunit. Functionally, with S5 and S12 plays an important role in translational accuracy. The chain is Small ribosomal subunit protein uS4 from Orientia tsutsugamushi (strain Boryong) (Rickettsia tsutsugamushi).